We begin with the raw amino-acid sequence, 208 residues long: ATP phosphoribosyltransferase (208 aa).

It belongs to the ATP phosphoribosyltransferase family. Short subfamily. Heteromultimer composed of HisG and HisZ subunits.

The protein localises to the cytoplasm. It catalyses the reaction 1-(5-phospho-beta-D-ribosyl)-ATP + diphosphate = 5-phospho-alpha-D-ribose 1-diphosphate + ATP. It participates in amino-acid biosynthesis; L-histidine biosynthesis; L-histidine from 5-phospho-alpha-D-ribose 1-diphosphate: step 1/9. Its function is as follows. Catalyzes the condensation of ATP and 5-phosphoribose 1-diphosphate to form N'-(5'-phosphoribosyl)-ATP (PR-ATP). Has a crucial role in the pathway because the rate of histidine biosynthesis seems to be controlled primarily by regulation of HisG enzymatic activity. This is ATP phosphoribosyltransferase (hisG) from Thermotoga maritima (strain ATCC 43589 / DSM 3109 / JCM 10099 / NBRC 100826 / MSB8).